The chain runs to 334 residues: DCN1-like protein 3 (334 aa).

The 190-residue stretch at 112 to 301 (VSHQTLSKLF…LFDDFVDYEK (190 aa)) folds into the DCUN1 domain. The interval 308-334 (SGIHDDDNNNDDPLQSHVKAEDPGLVS) is disordered. A compositionally biased stretch (basic and acidic residues) spans 325 to 334 (VKAEDPGLVS).

The protein resides in the cell membrane. Promotes neddylation of cullin components of SCF-type E3 ubiquitin ligase complexes and thus regulates SCF-type complex activity. Function promotes cell proliferation. The sequence is that of DCN1-like protein 3 from Drosophila melanogaster (Fruit fly).